Here is a 348-residue protein sequence, read N- to C-terminus: Dihydroorotase (348 aa).

2 residues coordinate Zn(2+): His-17 and His-19. Substrate-binding positions include 19 to 21 (HLR) and Asn-45. Zn(2+) is bound by residues Lys-103, His-140, and His-178. Residue Lys-103 is modified to N6-carboxylysine. His-140 is a substrate binding site. Position 223 (Leu-223) interacts with substrate. Residue Asp-251 participates in Zn(2+) binding. Asp-251 is an active-site residue. His-255 and Ala-267 together coordinate substrate.

Belongs to the metallo-dependent hydrolases superfamily. DHOase family. Class II DHOase subfamily. As to quaternary structure, homodimer. Zn(2+) serves as cofactor.

The enzyme catalyses (S)-dihydroorotate + H2O = N-carbamoyl-L-aspartate + H(+). Its pathway is pyrimidine metabolism; UMP biosynthesis via de novo pathway; (S)-dihydroorotate from bicarbonate: step 3/3. Its function is as follows. Catalyzes the reversible cyclization of carbamoyl aspartate to dihydroorotate. This Salmonella newport (strain SL254) protein is Dihydroorotase.